A 231-amino-acid polypeptide reads, in one-letter code: Chalcone--flavanone isomerase (231 aa).

Substrate-binding residues include threonine 46, asparagine 111, and serine 188.

The protein belongs to the chalcone isomerase family. Pericarp.

It catalyses the reaction a chalcone = a flavanone.. The protein operates within secondary metabolite biosynthesis; flavonoid biosynthesis. Its function is as follows. Catalyzes the intramolecular cyclization of bicyclic chalcones into tricyclic (S)-flavanones. Responsible for the isomerization of 4,2',4',6'-tetrahydroxychalcone (also termed chalcone) into naringenin. In Zea mays (Maize), this protein is Chalcone--flavanone isomerase (CHI).